The chain runs to 125 residues: UPF0102 protein mlr4633 (125 aa).

It belongs to the UPF0102 family.

The protein is UPF0102 protein mlr4633 of Mesorhizobium japonicum (strain LMG 29417 / CECT 9101 / MAFF 303099) (Mesorhizobium loti (strain MAFF 303099)).